A 316-amino-acid chain; its full sequence is Serpentine receptor class delta-48 (316 aa).

Helical transmembrane passes span 8–28, 42–62, 89–109, 127–147, 185–205, 236–256, and 269–289; these read FFYI…IFVI, FLLC…LLQL, LFYV…FITI, VVII…QIDL, FLLT…GFFI, TLQS…YFVV, and ILPV…LYSV.

The protein belongs to the nematode receptor-like protein srd family.

It is found in the membrane. In Caenorhabditis elegans, this protein is Serpentine receptor class delta-48 (srd-48).